The sequence spans 5560 residues: MFRCRNMVRDNSRNICFGKLAETTTTQQQQQQQQFVVDSSTIINNNNNNNNNNNNQKLKRSTEEPPTNSFERNYYDRTTSRLVTQYQANNSTSLANSNSSPSSVSASASVFATAAGGSSERSRNRDRPYRNGSASVQGGGINSSNTTTTTAACTAGGSGSGAIGTGTGGLVGSGPGGVPQALGDRSSTQNIHQNHQSARVAPPQSWYEAATAATTAQLKSSGGSGNAGASAAVGFTMSSSPINHHPHQHPHLQNPQHPHYTSSPVVGAGSCPSAAQGQPQIQSQSQTTAVHRSVAYAGSAADDLLNTATSRNMLLHSSKLNKLLKGAGATGSGGERSGSESPGRAGGATPLTTTSTITNNSFSSNSLNNTITTATPTMPTIASGAAGSVGLGSGAEAGVCSNSGTASGDILNVAAVLAAAVDNGVPTHPIRTRHNLHGRSTTSSSRSHSRSPSSYSSSHSSSSSSHSSSHSHASSPVQSSGNCAMAEGRSSRTVNSVTVTSNSSNPSGTAVTVSSAGVGGGCGSSSSSSSSSSSSGSSCLTANPVVHSEDNRPLAIRVRNLPARSSDTSLKDGLFHEYKKHGKVTWVKVVGQNSERYALVCFKKPDDVEKALEVSHDKHFFGCKIEVEPYQGYDVEDNEFRPYEAELDEYHPKSTRTLFIGNLEKDITAGELRSHFEAFGEIIEIDIKKQGLNAYAFCQYSDIVSVVKAMRKMDGEHLGSNRIKLGFGKSMPTNCVWIDGVDEKVSESFLQSQFTRFGAVTKVSIDRNRQLALVLYDQVQNAQAAVKDMRGTILRRKKLQVDFASRECQDAFYDKQEKQQQQSSGSNPRFSRYESSASSLQSRSRASSFSRHQNNSNDDCSPINTPGGASSGISSASNLINQSTSINISNIGTNACSAMPAPSLASAVVSCNVNASGTVPASTSMPSGVSSSSSSLPMSPAALAQRHRMVRNARQTVDCDFNEVGRLRFRSSEEVSGGAGNSTQFEDVRCDSPVTARQGSAVNCFTGPTAAVGESIDGTLNNNQITGGAEGFTGSGGSILSRRRCGKTPKDLHPVHNQRIQLAEQVEECPSSGDEGVVSPRKRIKMDYHHHHHHSNASGVESTGEHSSINKPSPLLLSNCDVIHDPLNRKSEIRRVSETPSGSPSIKFPGHLPSAPQSLMLSCRRPSIDVGALSALSSSSAFRHGIVGASSMDQQHMMNASAAAKRRRVTTTMQQPSSSSTTNSSSGSGLGGISSLTPADEYHHHVSRGRGHQLHSHHSHEASGGESADGSRPGTPLCDERPEVLPTEPRRLPPPRERVRERTRDVMWLPLPKFGVLFFQQQQSRSSGGGGAGNSYLQQQLGGGSTGGLGCIGAASSSACSLNNSSLNASQGMGSCSGSTFLPSPSSRYWRSSSHHQNQQNNHQQQSQQLHGSSSSNTCLMASPARPRSLSSNSSDSDVPGQNAGGSPSLDERLRNFEENYERWSGGSSREHISGHTPSSATPSWQLSMHMNLSTGLNSHQTSSASGNSNSSSGTVSSSASNSRHKFLDIDELQPSDIVKSVLAKKSVFDDDFQRLNKNQWYDPSSSDFALGSSSNIVTGSSLVANVSRHPGGPCSGNTSPALPNLAATKATPIIGNCSGGLGNSTGSKSAGLLQRLSSLSPMNSPQASMSPYNSPSPSPSVGGVTACLGQLTKPAAPGTASAGLSGGTAASSSSPAANSGPTKGLQYPFPSHPPLPNTAAPPPAVQPAPPPLPEMGKQSRLTGQSSGNNLTKSLSVPDGPQSSPARVQLQKSASVPGSTNVGAPSSLSLDSTTASVETSASISSSTSNGNSSLTSAAIHVQKPQQSTFVEEEHTKKSGTSTSQSSSSSSKKISSTHDKLHSKHNNRSESDKKIKKSDKNASSSDKRKNSSTSQSSKSATPRIEDDSSEADDTADKAEKNQRHEKEKKERQEKREKDLRKQVEREEKDRKAQQEEREKEDRKAKEEEKEREREKKAQEDREKKEREERELREKEQRDKEQKEKEIREKDLREKEQRERDNREKELRDKDLREKEMREKEQREKELHREKDQREREHREKEQSRRAMDVEQEGRGGRMRELSSYQKSKMDIAGEASSLTAIDCQHNKENAMDTIAQGTPGASPSTPSDNTPKERSRKLSRNSPVRLHKRRLSSQESNHSAGGGGSCGGSSHQIHHEDYVKRIRMENSQNISVHSSNQRLNDRRDSKEHKSSSFKEDKNSSSHISRPHGCGGSSASSSKHHHRRDKHHQKGSASSIETNSSIEVVVDPISQTKHNLNTSEEELQSHQPKREKEREHFSSHANSSSSRHKSKRDHHHHREKKRHSVAESTNTDEEHTPQQHNPHRRISAAGSGSAGELSSAATNTSSGKLHHQHHRRSVERKSSRGSDEGHHSSSKSLRAKLMMLSSADSDDTDDASKKHSIFDIPDDCPNVSMYDKVKARSCKNMQRQAEEKKIKAKFSQLKQSRAKKKRSTSYDGDSDTEFEDRQHRNSGSSSFHGRYPGLSSSDDDDDEETHQRRISSDSDAEHGGQDNQGASTLADANRVRQMQQNLRRLCDGDDSSEDEIRRNVMKHSHFGKRNSNSTRIASDSESQSQPAPDLTIKQEHPIAPAQEIKREQLSDEEQKFKSRHDSNSSIEERKLKTEREIKTELGDFYNSSEYTYTGKLKEYSPETRKKHKKSKRRLKSSSTADTSAAQTPLVMTPLTPSIFDVHSSSECKTKFDNFDDLKTECSSIPLEISAGERRKHKERKEKKREKLRNMTEATVPNSPTTNDTSSEKLSKEERHRLKKSKKSKSMDNSCNTKIYNSSGAHPSTSPSLPATPTSAPSTAQTSKRGEDKMEFIFGIISDEEESQFPEQAETNKDIIPSSVSTTGPIVSAALQTYKQEPSTPNSKNEEAHIQLTVHEPEQQQQLERSRLSGGSSSSSHADRERHRREKREKKRREKSQREQQNQIHQKSSKVETKVDDDNSVDMDEAGRALEAQLMSDFDTKPISEEATPSTAATYRSDMTDVFRFSDNEDNNSVDMTKQGVKSEQQEQHKSKDKKKKKKRSKEEKQEKLLQQQRRESLPNVASTSSAPPTPGKLTVNVQAASKHADLQLDAKHISSPPVCKPSPSLPCLIGDDDDDALHTPKAKPTTPSSRGNDGLTPSREKPRLISPIPKTPTIANSSTLSTQSAETPVSSGTVISSSALATTPTSSTAAGVSAAPGLDNSPTSASAQCKKKESFIPGFDGQLDDRISESAVQSISAEFNSTSLLDNIADEPKIPVASPPRATKPLDKLEESKSRVTISQEETESAVSALLGESFGTSSTTDYSLDGMDEMSSVNELETPTLVIAEPDEEAALAAKAIETAGEPASILEEPEMEPEREAEPDPDPEAEIESEPVVEVLDPEELNKAVQSLKHEDMMDIKADTPQSERDLQIDTDTEENPDEADSSGPSLKIDETVQSSSSPEKSISNNSPTPRETANIDIPNVESQPKLSNESTPQPSVITKLPFLDTPKTVPAGLPPSPVKIEPPTISKLQQPLVQPVQTVLPAPHSTGSGISANSVINLDLSNVISSCSNTSAASATASASASISFGSPTASQNAMPQASTPKQGPITPQQAIRTQSLIMQPPTISIPEQTPHFAVPQMVLSPQSHHPQQPGTYMVGIRAPSPHSPLHSPGRGVAQSRLVGQLSPVGRPMVSQPSPQQQVQQTQQQHALITSPQSSNISPLASPTTRVLSSSNSPTTSKVNSYQPRNQQVPQQPSPKSVAEVQTTPQLMTIPLQKMTPIQVPHHPTIISKVVTVQPQQATQSQVASSPPLGSLPPHKNVHLNAHQNQQQPQVIAKMTAHQHQQHMQQFMHQQMIQRQQHMQQQQLHGQSQQITSAPQHQMHQQHQAQQQQQHHNQQHLNQQLHAQQHPTQKQHQAQQQFNQQIQQHQSQQQHQVQQQNQAQQQHLSQQQHQSQQQLNQQHQAQQQQLQQIQKLQQMHGPQQQQKSPQGVGHLGGSTSIFASQQHNSQLPARGVPQQQHPQQLSHSSPCKPNTLVSVNQGVQPPAILTRVGSHSQPNQQQQLPHQQSSSGHPHQKQLSSPGANLPLQTPLNVIQNTPKIIVQQHIVAQNQVPPPQTQGNAIHYPQNQGKDSTPPGHVEPTPAMSAQKTSESVSVIRTPTPTTGLAVISANTVGSLLTEENLIKISQPKQDELIEQDSKEVDSDYWSAKEVNIDSVIKKLDTPLASKDAKRAVEMQAIAPAPIPNPQPGNQSMAQETALPTTSMSVNNSNDHDTEDETETRQLPPAKPPIPTVGRPPGRGGSAKRGRQPRGAKKVGGFPLNSVTAAPPGVDSLVVQPGDNGVQTRLRKPVTAPVTRGRKGRPPRNLLLQQQQLQQQQLDIQRKGMEMVTSATSSTPLPTPIPTSSVLTAAEKKARNQALTQAQEQNQVASQVGTGQDIYEFHEDGGEEPKPKTISSVAPSAEDQRPRLILTINKTQPSIKNISEMEQTIQQQQQQQSEVISNTDPIGGDNSESCNTRKSRRLQEKEDRSTVDDIIEDVVRNTNTPTGTGPHLPKGAQTPPRRSGRNAQAKKTDAVQIINAVGRPRRSKDRKTIGEQTANLIEEVTASNATVAASHLAPPEGAGVESHVPQLDAKEVEPVSVVTPISTPAPVSVAAPVTVPVPAMVPVKPTMPQHPKKKAIAAAEIESYQAINSSIPSGGLPMHQTAAPATQKITGGVADAVSKALVDPVTGVITAGMPQGKEGNLPAATAAAPANSSNEDGQAAPPPQLQHQQQQQHPQQPPQQQANLQINTTLIPSGLPNPITALGKSVQLETSAAALLNKPVSVLVKGNASQVIQQQQPQIVAPAKQPIILQQNPLPTVLHHAQHTTVRPPQPLKAHVLNREKNIQQQLTPTKQAVAQPPQHAPHSGHMLLTDTAGNQQLVQPQIIARHLQQQQHLQVNVPPPTAHSPHSPRIPSQQQQLGPGASISPQQQQPQTVVIKQAASAAQPQILHVVSSKASVVPQPQQQQLPPTSSTGPHLQLAKPNYSYAPTVLTPTLPAVQQQQQQHLYKQNNQQKGAQIQMPPHGIIMPTHPGMLLQQKLPAHLQPQQHQLNPSPPPGKPNPVLHGLQSGQIMPGSVGSPPPVSAAVLKTAQQQVNSVVPVAGIRTAIPNISPQSQPRVSPLVLPPGISGVPPFDASLHDLGAYVSGRRTQSPPPAHQQASPITPNDSTYRGVTASRDFMLYQHHLMRGGDYDDKMGSSPPLELRRPGSGPPRTIAVPHSLQSPQDRTAADSPQMAQVYVHNTRIPPAHFSEIASRGLYDSGALQLEPPPAHRPTATISVVVPQQMPAVSSGSPFIGRDGSVQPGSHHHPGKAMDMQLDEMDRMSMIAAVVQQQQEHLPPALPAGMELASQQAPPAMAPPPGDSLVTLLQRYPVMWQGLLALKTDQAAVQMHFVHGNPNVARASLPSLVETNTPLLRIAQRMRLEQTQLEGVAKKMQVDKEHCMLLALPCGRDHADVLQHSRNLQTGFITYLQQKMAAGIVNIPIPGSEQAAYVVHIFPSCDFANENLERAAPDLKNRVAELAHLLIVIATV.

6 disordered regions span residues 42 to 72, 114 to 145, 166 to 204, 236 to 287, 326 to 366, and 425 to 545; these read IINN…SFER, AAGG…NSSN, GTGG…APPQ, TMSS…QSQT, GAGA…SSNS, and VPTH…ANPV. Low complexity predominate over residues 44–55; that stretch reads NNNNNNNNNNNN. Positions 120 to 129 are enriched in basic and acidic residues; the sequence is ERSRNRDRPY. Over residues 166-177 the composition is skewed to gly residues; the sequence is GTGGLVGSGPGG. Over residues 185-197 the composition is skewed to polar residues; sequence RSSTQNIHQNHQS. Composition is skewed to low complexity over residues 272 to 287, 339 to 366, 440 to 480, 491 to 516, and 524 to 539; these read PSAA…QSQT, SESP…SSNS, STTS…VQSS, SRTV…VSSA, and SSSS…GSSC. 3 consecutive RRM domains span residues 554–632, 656–730, and 734–806; these read LAIR…PYQG, RTLF…FGKS, and NCVW…FASR. 4 disordered regions span residues 814 to 876, 1027 to 1054, 1089 to 1114, and 1131 to 1150; these read DKQE…ISSA, GGAE…DLHP, HHHH…KPSP, and SEIR…KFPG. The span at 833–851 shows a compositional bias: low complexity; sequence YESSASSLQSRSRASSFSR. Over residues 852-864 the composition is skewed to polar residues; the sequence is HQNNSNDDCSPIN. Over residues 867 to 876 the composition is skewed to low complexity; it reads GGASSGISSA. The span at 1028–1037 shows a compositional bias: gly residues; sequence GAEGFTGSGG. Positions 1096–1111 are enriched in polar residues; it reads NASGVESTGEHSSINK. Phosphoserine is present on Ser-1174. 2 disordered regions span residues 1196-1298 and 1386-1521; these read HMMN…PRER and SSRY…SSAS. The segment covering 1217 to 1237 has biased composition (low complexity); the sequence is SSSSTTNSSSGSGLGGISSLT. Residues 1245–1258 are compositionally biased toward basic residues; it reads HVSRGRGHQLHSHH. The span at 1278–1298 shows a compositional bias: basic and acidic residues; it reads CDERPEVLPTEPRRLPPPRER. The span at 1386–1438 shows a compositional bias: low complexity; the sequence is SSRYWRSSSHHQNQQNNHQQQSQQLHGSSSSNTCLMASPARPRSLSSNSSDSD. Positions 1449 to 1465 form a coiled coil; that stretch reads SLDERLRNFEENYERWS. Residues 1450 to 1462 are compositionally biased toward basic and acidic residues; it reads LDERLRNFEENYE. Over residues 1476-1501 the composition is skewed to polar residues; it reads HTPSSATPSWQLSMHMNLSTGLNSHQ. A compositionally biased stretch (low complexity) spans 1502–1521; it reads TSSASGNSNSSSGTVSSSAS. Phosphoserine is present on residues Ser-1596 and Ser-1600. 2 disordered regions span residues 1640–2428 and 2450–2537; these read LSPM…DCPN and KKIK…TLAD. Residues 1675-1703 are compositionally biased toward low complexity; it reads PAAPGTASAGLSGGTAASSSSPAANSGPT. The segment covering 1711-1734 has biased composition (pro residues); it reads PSHPPLPNTAAPPPAVQPAPPPLP. Residues 1740-1791 are compositionally biased toward polar residues; it reads SRLTGQSSGNNLTKSLSVPDGPQSSPARVQLQKSASVPGSTNVGAPSSLSLD. Composition is skewed to low complexity over residues 1792-1818 and 1838-1853; these read STTA…TSAA and SGTS…SKKI. Positions 1902–2071 form a coiled coil; the sequence is RIEDDSSEAD…SRRAMDVEQE (170 aa). 2 positions are modified to phosphoserine: Ser-1907 and Ser-1908. A compositionally biased stretch (basic and acidic residues) spans 1913–2079; sequence TADKAEKNQR…QEGRGGRMRE (167 aa). The span at 2114 to 2128 shows a compositional bias: polar residues; that stretch reads AQGTPGASPSTPSDN. Residues 2133 to 2150 show a composition bias toward basic residues; sequence RSRKLSRNSPVRLHKRRL. Positions 2172 to 2183 are enriched in basic and acidic residues; that stretch reads IHHEDYVKRIRM. Residues 2184-2197 are compositionally biased toward polar residues; it reads ENSQNISVHSSNQR. The span at 2198–2218 shows a compositional bias: basic and acidic residues; sequence LNDRRDSKEHKSSSFKEDKNS. The span at 2236-2248 shows a compositional bias: basic residues; that stretch reads SKHHHRRDKHHQK. Polar residues-rich tracts occupy residues 2249 to 2260 and 2267 to 2276; these read GSASSIETNSSI and ISQTKHNLNT. The residue at position 2276 (Thr-2276) is a Phosphothreonine. Ser-2277 is modified (phosphoserine). A compositionally biased stretch (basic and acidic residues) spans 2286–2296; sequence PKREKEREHFS. The span at 2304-2321 shows a compositional bias: basic residues; that stretch reads SRHKSKRDHHHHREKKRH. The residue at position 2329 (Thr-2329) is a Phosphothreonine. Ser-2345, Ser-2349, and Ser-2351 each carry phosphoserine. Residues 2345–2359 are compositionally biased toward low complexity; it reads SAAGSGSAGELSSAA. Residues 2366-2376 are compositionally biased toward basic residues; sequence KLHHQHHRRSV. Positions 2377-2389 are enriched in basic and acidic residues; it reads ERKSSRGSDEGHH. 3 positions are modified to phosphoserine: Ser-2403, Ser-2404, and Ser-2407. Thr-2410 is subject to Phosphothreonine. At Ser-2476 the chain carries Phosphoserine. Residue Thr-2478 is modified to Phosphothreonine. A phosphoserine mark is found at Ser-2501, Ser-2502, Ser-2503, Ser-2517, Ser-2518, Ser-2520, Ser-2557, and Ser-2558. Basic and acidic residues predominate over residues 2511–2526; the sequence is THQRRISSDSDAEHGG. Over residues 2565 to 2574 the composition is skewed to basic residues; it reads NVMKHSHFGK. 7 disordered regions span residues 2565-2637, 2665-2695, 2736-2832, 2844-3215, 3257-3313, 3341-3487, and 3572-3597; these read NVMK…ERKL, YSPE…QTPL, AGER…KRGE, DEEE…SAQC, EPKI…SLDG, AKAI…SVIT, and ISFG…PITP. The span at 2575 to 2592 shows a compositional bias: polar residues; that stretch reads RNSNSTRIASDSESQSQP. Ser-2584, Ser-2586, and Ser-2588 each carry phosphoserine. Over residues 2609–2637 the composition is skewed to basic and acidic residues; that stretch reads EIKREQLSDEEQKFKSRHDSNSSIEERKL. A compositionally biased stretch (basic residues) spans 2670–2681; that stretch reads RKKHKKSKRRLK. Residues 2682–2693 show a composition bias toward low complexity; it reads SSSTADTSAAQT. The stretch at 2732–2760 forms a coiled coil; sequence LEISAGERRKHKERKEKKREKLRNMTEAT. Positions 2739 to 2752 are enriched in basic residues; it reads RRKHKERKEKKREK. Polar residues predominate over residues 2757 to 2770; that stretch reads TEATVPNSPTTNDT. Positions 2771 to 2781 are enriched in basic and acidic residues; sequence SSEKLSKEERH. Over residues 2792 to 2807 the composition is skewed to polar residues; that stretch reads MDNSCNTKIYNSSGAH. Residues 2808–2828 show a composition bias toward low complexity; it reads PSTSPSLPATPTSAPSTAQTS. Residues 2863–2888 show a composition bias toward polar residues; it reads SSVSTTGPIVSAALQTYKQEPSTPNS. Residues 2925-2957 adopt a coiled-coil conformation; sequence RERHRREKREKKRREKSQREQQNQIHQKSSKVE. The segment covering 2927–2940 has biased composition (basic residues); sequence RHRREKREKKRREK. Residues 3003 to 3012 are compositionally biased toward basic and acidic residues; that stretch reads DMTDVFRFSD. Phosphoserine is present on residues Ser-3011 and Ser-3018. Residues 3026-3063 are a coiled coil; sequence VKSEQQEQHKSKDKKKKKKRSKEEKQEKLLQQQRRESL. Positions 3036 to 3045 are enriched in basic residues; that stretch reads SKDKKKKKKR. Basic and acidic residues-rich tracts occupy residues 3046 to 3062 and 3088 to 3098; these read SKEE…RRES and KHADLQLDAKH. Thr-3125 is modified (phosphothreonine). Positions 3159–3181 are enriched in polar residues; the sequence is TIANSSTLSTQSAETPVSSGTVI. The span at 3182–3201 shows a compositional bias: low complexity; that stretch reads SSSALATTPTSSTAAGVSAA. Residues 3270–3280 are compositionally biased toward basic and acidic residues; sequence KPLDKLEESKS. A compositionally biased stretch (acidic residues) spans 3367 to 3387; it reads PDPDPEAEIESEPVVEVLDPE. Residues 3396-3416 show a composition bias toward basic and acidic residues; that stretch reads LKHEDMMDIKADTPQSERDLQ. Thr-3408 carries the phosphothreonine modification. Residue Ser-3411 is modified to Phosphoserine. A compositionally biased stretch (acidic residues) spans 3417–3429; that stretch reads IDTDTEENPDEAD. The segment covering 3443–3456 has biased composition (low complexity); it reads SSSSPEKSISNNSP. Polar residues-rich tracts occupy residues 3469–3485 and 3574–3597; these read VESQ…QPSV and FGSP…PITP. Phosphoserine is present on residues Ser-3650, Ser-3653, Ser-3657, and Ser-3672. Disordered stretches follow at residues 3673–3750, 3787–3807, 3821–4024, 4036–4075, 4098–4138, 4248–4306, 4426–4453, 4471–4558, 4723–4771, 4920–4963, 4984–5009, 5176–5197, and 5220–5241; these read PVGR…VAEV, ATQS…HKNV, IAKM…LVSV, RVGS…PLQT, VPPP…TSES, TSMS…GFPL, EFHE…QRPR, MEQT…AKKT, MPQG…PQQQ, QQQH…QPQT, KASV…LQLA, RRTQ…NDST, and YDDK…GPPR. Residues 3679-3694 are compositionally biased toward low complexity; that stretch reads VSQPSPQQQVQQTQQQ. Polar residues predominate over residues 3695–3735; sequence HALITSPQSSNISPLASPTTRVLSSSNSPTTSKVNSYQPRN. Phosphoserine is present on Ser-3707. Residues 3736 to 3747 show a composition bias toward low complexity; it reads QQVPQQPSPKSV. Low complexity predominate over residues 3827-3963; that stretch reads HQHQQHMQQF…QLQQIQKLQQ (137 aa). Residues 3905-3965 adopt a coiled-coil conformation; it reads QQFNQQIQQH…QQIQKLQQMH (61 aa). 2 stretches are compositionally biased toward polar residues: residues 3965–3974 and 3982–3996; these read HGPQQQQKSP and GSTS…NSQL. Low complexity-rich tracts occupy residues 4002-4015 and 4039-4058; these read PQQQ…HSSP and SHSQ…SSGH. 2 stretches are compositionally biased toward polar residues: residues 4064-4075 and 4098-4117; these read LSSPGANLPLQT and VPPP…QGKD. Basic residues predominate over residues 4288-4299; it reads SAKRGRQPRGAK. Positions 4426–4437 are enriched in basic and acidic residues; it reads EFHEDGGEEPKP. Residues 4465 to 4486 adopt a coiled-coil conformation; that stretch reads IKNISEMEQTIQQQQQQQSEVI. Residues 4483 to 4502 are compositionally biased toward polar residues; it reads SEVISNTDPIGGDNSESCNT. Basic and acidic residues predominate over residues 4507–4517; sequence RLQEKEDRSTV. A compositionally biased stretch (low complexity) spans 4755 to 4771; it reads LQHQQQQQHPQQPPQQQ. Phosphoserine is present on Ser-4938. Residues 4984–5001 are compositionally biased toward low complexity; the sequence is KASVVPQPQQQQLPPTSS. One can recognise an SPOC domain in the interval 5393-5560; sequence LVTLLQRYPV…AHLLIVIATV (168 aa).

The protein belongs to the RRM Spen family. As to expression, ubiquitous. Expressed prior to cellularization in stage 3 embryos, and in blastoderm cells, including pole cells. Expressed throughout the rest of embryogenesis. Later, it is expressed at higher level in epidermal cells and CNS.

It localises to the nucleus. In terms of biological role, probable corepressor protein, which regulates different key pathways such as the EGF receptor and Wg pathways. Involved in neuronal cell fate, survival and axon guidance, cell cycle regulation and repression of head identity in the embryonic trunk. May act with the Hox gene Deformed and the EGF receptor signaling pathway. Positive regulator of the Wg pathway in larval tissues but not in embryonic tissues. May act as a transcriptional corepressor protein, which repress transcription via the recruitment of large complexes containing histone deacetylase proteins. This is Protein split ends (spen) from Drosophila melanogaster (Fruit fly).